The primary structure comprises 156 residues: Small ribosomal subunit protein uS7 (156 aa).

Belongs to the universal ribosomal protein uS7 family. As to quaternary structure, part of the 30S ribosomal subunit. Contacts proteins S9 and S11.

In terms of biological role, one of the primary rRNA binding proteins, it binds directly to 16S rRNA where it nucleates assembly of the head domain of the 30S subunit. Is located at the subunit interface close to the decoding center, probably blocks exit of the E-site tRNA. The sequence is that of Small ribosomal subunit protein uS7 from Methylocella silvestris (strain DSM 15510 / CIP 108128 / LMG 27833 / NCIMB 13906 / BL2).